Consider the following 209-residue polypeptide: Large ribosomal subunit protein uL3 (209 aa).

Residues 132–153 (ATHGNSLSHRVPGSIGQNQTPG) are disordered. At Q150 the chain carries N5-methylglutamine.

It belongs to the universal ribosomal protein uL3 family. As to quaternary structure, part of the 50S ribosomal subunit. Forms a cluster with proteins L14 and L19. Methylated by PrmB.

Its function is as follows. One of the primary rRNA binding proteins, it binds directly near the 3'-end of the 23S rRNA, where it nucleates assembly of the 50S subunit. In Erwinia tasmaniensis (strain DSM 17950 / CFBP 7177 / CIP 109463 / NCPPB 4357 / Et1/99), this protein is Large ribosomal subunit protein uL3.